The following is a 349-amino-acid chain: Hydroxymethylglutaryl-CoA synthase (349 aa).

(3S)-3-hydroxy-3-methylglutaryl-CoA-binding residues include aspartate 30 and alanine 31. Glutamate 82 serves as the catalytic Proton donor/acceptor. Positions 114 and 155 each coordinate (3S)-3-hydroxy-3-methylglutaryl-CoA. Cysteine 114 serves as the catalytic Acyl-thioester intermediate. Arginine 203 contacts CoA. Residues threonine 205 and histidine 238 each contribute to the (3S)-3-hydroxy-3-methylglutaryl-CoA site. The active-site Proton donor/acceptor is histidine 238. Residue lysine 243 participates in CoA binding. (3S)-3-hydroxy-3-methylglutaryl-CoA contacts are provided by asparagine 270 and serine 300.

The protein belongs to the thiolase-like superfamily. Archaeal HMG-CoA synthase family. In terms of assembly, interacts with acetoacetyl-CoA thiolase that catalyzes the precedent step in the pathway and with a DUF35 protein. The acetoacetyl-CoA thiolase/HMG-CoA synthase complex channels the intermediate via a fused CoA-binding site, which allows for efficient coupling of the endergonic thiolase reaction with the exergonic HMGCS reaction.

The enzyme catalyses acetoacetyl-CoA + acetyl-CoA + H2O = (3S)-3-hydroxy-3-methylglutaryl-CoA + CoA + H(+). The protein operates within metabolic intermediate biosynthesis; (R)-mevalonate biosynthesis; (R)-mevalonate from acetyl-CoA: step 2/3. Functionally, catalyzes the condensation of acetyl-CoA with acetoacetyl-CoA to form 3-hydroxy-3-methylglutaryl-CoA (HMG-CoA). Functions in the mevalonate (MVA) pathway leading to isopentenyl diphosphate (IPP), a key precursor for the biosynthesis of isoprenoid compounds that are building blocks of archaeal membrane lipids. The sequence is that of Hydroxymethylglutaryl-CoA synthase from Methanococcus vannielii (strain ATCC 35089 / DSM 1224 / JCM 13029 / OCM 148 / SB).